A 425-amino-acid polypeptide reads, in one-letter code: C2H2 type master regulator of conidiophore development brlA (425 aa).

Disordered regions lie at residues 28-72 (MASS…RHTG), 232-257 (KTHS…PMSR), and 281-301 (VQRQ…SLSL). Low complexity predominate over residues 30 to 44 (SSFSPMESPTPTPTS). Residues 232–256 (KTHSPTTPVRSCSLGTTSGTDTPMS) are compositionally biased toward polar residues. Residues 285 to 294 (PSRKVARKQS) show a composition bias toward basic residues. C2H2-type zinc fingers lie at residues 321–345 (KGRF…PHVC) and 351–376 (ERAF…GRNR). Basic residues predominate over residues 365–374 (TKTHSKRGGR). A disordered region spans residues 365-425 (TKTHSKRGGR…RETSEEAWLE (61 aa)).

It localises to the nucleus. Functionally, brlA, abaA and wetA are pivotal regulators of conidiophore development and conidium maturation. They act individually and together to regulate their own expression and that of numerous other sporulation-specific genes. Binds promoters of target genes at brlA response elements (BREs) containing the conserved sequence 5'-(C/A)(A/G)AGGG(G/A)-3'. Also coordinates the expression of carbohydrate-active enzymes and of the key effectors of cell wall remodeling during autolysis. This Aspergillus niger (strain ATCC MYA-4892 / CBS 513.88 / FGSC A1513) protein is C2H2 type master regulator of conidiophore development brlA.